Consider the following 37-residue polypeptide: Disintegrin morulustatin (37 aa).

3 disulfide bridges follow: Cys12–Cys16, Cys22–Cys36, and Cys24–Cys31.

The protein belongs to the venom metalloproteinase (M12B) family. P-II subfamily. P-IIa sub-subfamily. In terms of tissue distribution, expressed by the venom gland.

It is found in the secreted. Its function is as follows. Inhibits ADP-induced platelet aggregation in human whole blood in a concentration-dependent manner (IC(50)=89.5 nM). This Crotalus morulus (Tamaulipan rock rattlesnake) protein is Disintegrin morulustatin.